A 296-amino-acid polypeptide reads, in one-letter code: MAEISTARGSLVAIVTPMSDDGALDLGALRRLIDWHIEQGTDGIVIVGTTGESPTVNFDEHCLLIRTAVEQAGGRVPVIAGTGANSTSEAIALTECARAAGAQAGLSVVPYYNKPTQEGLYQHYRKIAEAVDLPLILYNVPGRTVADLANDTAVRLAEVPGIVGLKDATGNMERAADLVRRVPKGFALYSGDDASALPFMLLGGHGVISVTANVAPRLMHEMCVAAFEGNLARARECNDALLPLHSKLFVEANPIPVKWACAELGLIPPGLRLPLTPLSGGQHEVVRAAMRHAELI.

Position 50 (threonine 50) interacts with pyruvate. Residue tyrosine 138 is the Proton donor/acceptor of the active site. The active-site Schiff-base intermediate with substrate is the lysine 166. A pyruvate-binding site is contributed by isoleucine 208.

Belongs to the DapA family. Homotetramer; dimer of dimers.

It localises to the cytoplasm. The enzyme catalyses L-aspartate 4-semialdehyde + pyruvate = (2S,4S)-4-hydroxy-2,3,4,5-tetrahydrodipicolinate + H2O + H(+). It functions in the pathway amino-acid biosynthesis; L-lysine biosynthesis via DAP pathway; (S)-tetrahydrodipicolinate from L-aspartate: step 3/4. Its function is as follows. Catalyzes the condensation of (S)-aspartate-beta-semialdehyde [(S)-ASA] and pyruvate to 4-hydroxy-tetrahydrodipicolinate (HTPA). The protein is 4-hydroxy-tetrahydrodipicolinate synthase of Thiobacillus denitrificans (strain ATCC 25259 / T1).